The primary structure comprises 460 residues: Photosystem II CP43 reaction center protein (460 aa).

Residues 1–35 are Cytoplasmic-facing; sequence MVTLSNTSMVGGRDLPSTGFAWWSGNARLINLSGK. The chain crosses the membrane as a helical span at residues 36 to 58; the sequence is LLGAHVAHAGLIVFWAGAMTLFE. Over 59 to 98 the chain is Lumenal, thylakoid; that stretch reads VAHFIPEKPMYEQGLILLPHIATLGWGVGPAGEVTDIFPF. The helical transmembrane segment at 99–121 threads the bilayer; sequence FVVGVLHLISSAVLGLGGIYHAL. Topologically, residues 122 to 142 are cytoplasmic; sequence RGPEVLEEYSSFFGYDWKDKN. The chain crosses the membrane as a helical span at residues 143 to 165; sequence QMTNIIGYHLILLGCGALLLVFK. Residues 166–220 are Lumenal, thylakoid-facing; it reads AMFFGGVYDTWAPGGGDVRVITNPTLNPAIIFGYLLKAPFGGEGWIISVNNMEDI. The chain crosses the membrane as a helical span at residues 221 to 240; it reads IGGHIWIGLICISGGIWHIL. Residues 241–255 lie on the Cytoplasmic side of the membrane; it reads TKPFGWARRALIWSG. The helical transmembrane segment at 256 to 276 threads the bilayer; the sequence is EAYLSYSLGALSLMGFIASVF. The Lumenal, thylakoid portion of the chain corresponds to 277–411; sequence VWFNNTAYPS…NSFNYVSPRA (135 aa). Positions 341 and 344 each coordinate [CaMn4O5] cluster. A helical transmembrane segment spans residues 412 to 436; the sequence is WLATSHFVLGFFFLVGHLWHAGRAR. The Cytoplasmic portion of the chain corresponds to 437–460; the sequence is AAAAGFEKGIDRETEPTLFMPDLD.

The protein belongs to the PsbB/PsbC family. PsbC subfamily. In terms of assembly, PSII is composed of 1 copy each of membrane proteins PsbA, PsbB, PsbC, PsbD, PsbE, PsbF, PsbH, PsbI, PsbJ, PsbK, PsbL, PsbM, PsbT, PsbX, PsbY, PsbZ, Psb30/Ycf12, peripheral proteins PsbO, CyanoQ (PsbQ), PsbU, PsbV and a large number of cofactors. It forms dimeric complexes. Binds multiple chlorophylls and provides some of the ligands for the Ca-4Mn-5O cluster of the oxygen-evolving complex. It may also provide a ligand for a Cl- that is required for oxygen evolution. PSII binds additional chlorophylls, carotenoids and specific lipids. is required as a cofactor.

The protein resides in the cellular thylakoid membrane. Functionally, one of the components of the core complex of photosystem II (PSII). PSII binds chlorophyll and helps catalyze the primary light-induced photochemical processes of PSII. PSII is a light-driven water:plastoquinone oxidoreductase, using light energy to abstract electrons from H(2)O, generating O(2) and a proton gradient subsequently used for ATP formation. Required for correct assembly of PSII. This Synechocystis sp. (strain ATCC 27184 / PCC 6803 / Kazusa) protein is Photosystem II CP43 reaction center protein.